The primary structure comprises 353 residues: MEKYLTKMPIKSKANEVPKEEAGVKKETPKVARKATKKDTPKELKDKENAGDDNTPKQTKGRPGRPAAKRKNLDTPDVTEKLAMEEENPPKRRSSRLTRSTRSMAEDGSPSPEKEKPEKLPFIKYKGAIKYFTESQDIAASADDVLQWVEKQKDEVVPMAFDMEWPFSFQTGPGKSAVIQICVDEKCCYIYQLTNVKKLPAALVALINHPKVRLHGVNIKNDFRKLARDFPEVTAEPLIEKCVDLGLWCNEVCETGGRWSLERLTNFIAKKAMDKSKKVRMSKWHVIPLDENQLMYAAIDVYIGQVIYRELERREKVKIKNEEEFKEKNGDAAFKAMKALGETFLTKINEVTL.

Positions 1 to 119 (MEKYLTKMPI…PSPEKEKPEK (119 aa)) are disordered. Composition is skewed to basic and acidic residues over residues 13–30 (KANE…ETPK) and 37–50 (KKDT…KENA). A compositionally biased stretch (basic residues) spans 59-70 (TKGRPGRPAAKR). Residues 71 to 90 (KNLDTPDVTEKLAMEEENPP) show a composition bias toward basic and acidic residues. A phosphoserine mark is found at serine 103, serine 109, and serine 111. Positions 145-313 (VLQWVEKQKD…GQVIYRELER (169 aa)) constitute a 3'-5' exonuclease domain. Residues aspartate 162, glutamate 164, and aspartate 300 each contribute to the Mg(2+) site.

The protein belongs to the WRNexo family.

The protein resides in the nucleus. In terms of biological role, has exonuclease activity on both single-stranded and duplex templates bearing overhangs, but not blunt ended duplex DNA, and cleaves in a 3'-5' direction. Essential for the formation of DNA replication focal centers. Has an important role in maintaining genome stability. The polypeptide is 3'-5' exonuclease (Drosophila melanogaster (Fruit fly)).